An 845-amino-acid chain; its full sequence is MSSRRWFHPTISGIEAEKLLQEQGFDGSFLARLSSSNPGAFTLSVRRGNEVTHIKIQNNGDFFDLYGGEKFATLPELVQYYMENGELKEKNGQAIELKQPLICAEPTTERWFHGNLSGKEAEKLILERGKNGSFLVRESQSKPGDFVLSVRTDDKVTHVMIRWQDKKYDVGGGESFGTLSELIDHYKRNPMVETCGTVVHLRQPFNATRITAAGINARVEQLVKGGFWEEFESLQQDSRDTFSRNEGYKQENRLKNRYRNILPYDHTRVKLLDVEHSVAGAEYINANYIRLPTDGDLYNMSSSSESLNSSVPSCPACTAAQTQRNCSNCQLQNKTCVQCAVKSAILPYSNCATCSRKSDSLSKHKRSESSASSSPSSGSGSGPGSSGTSGVSSVNGPGTPTNLTSGTAGCLVGLLKRHSNDSSGAVSISMAEREREREREMFKTYIATQGCLLTQQVNTVTDFWNMVWQENTRVIVMTTKEYERGKEKCARYWPDEGRSEQFGHARIQCVSENSTSDYTLREFLVSWRDQPARRIFHYHFQVWPDHGVPADPGCVLNFLQDVNTRQSHLAQAGEKPGPICVHCSAGIGRTGTFIVIDMILDQIVRNGLDTEIDIQRTIQMVRSQRSGLVQTEAQYKFVYYAVQHYIQTLIARKRAEEQSLQVGREYTNIKYTGEIGNDSQRSPLPPAISSISLVPSKTPLTPTSADLGTGMGLSMGVGMGVGNKHASKQQPPLPVVNCNNNNNGIGNSGCSNGGGSSTTSSSNGSSNGNINALLGGIGLGLGGNMRKSNFYSDSLKQQQQREEQAPAGAGKMQQPAPPLRPRPGILKLLTSPVIFQQNSKTFPKT.

SH2 domains are found at residues tryptophan 6 to leucine 101 and tryptophan 111 to phenylalanine 205. Residues phenylalanine 227–tyrosine 645 form the Tyrosine-protein phosphatase domain. The segment at isoleucine 289–threonine 444 is PTPase insert (Cys/Ser-rich). Residues serine 362–asparagine 402 form a disordered region. Composition is skewed to low complexity over residues serine 369–glycine 378 and threonine 388–proline 400. Serine 419 is subject to Phosphoserine. Residues aspartate 545, cysteine 583–arginine 589, and glutamine 630 contribute to the substrate site. Cysteine 583 functions as the Phosphocysteine intermediate in the catalytic mechanism. A disordered region spans residues aspartate 793 to glycine 824.

This sequence belongs to the protein-tyrosine phosphatase family. Non-receptor class subfamily. Interacts with drpr isoform A. Expressed uniformly throughout all tissues during embryogenesis.

It is found in the cytoplasm. The enzyme catalyses O-phospho-L-tyrosyl-[protein] + H2O = L-tyrosyl-[protein] + phosphate. Its function is as follows. Required in all receptor tyrosine kinase signaling pathways. Functions downstream of the receptor tyrosine kinase torso, acting in concert with D-Raf via tailless. Also functions downstream of Egfr (epidermal growth factor receptor) and btl (fibroblast growth factor receptor). The SH2 domain suggests that csw effects its role by mediating heteromeric protein interactions. Maternally required for normal determination of cell fates at the termini of the embryo. Required for cell fate specification of the ventral ectoderm, in the developing embryonic CNS and for embryonic tracheal cell migration. Functions during imaginal development for proper formation of adult structures such as eyes, aristae, L5 wing vein and the tarsal claw. Dephosphorylates drpr isoform A which is required for the inhibition by drpr isoform A of glial cell engulfment of axonal debris produced following axonal injury. This Drosophila melanogaster (Fruit fly) protein is Tyrosine-protein phosphatase corkscrew (csw).